A 169-amino-acid polypeptide reads, in one-letter code: Ribosome maturation factor RimM (169 aa).

The region spanning 95–168 is the PRC barrel domain; the sequence is PPDTAYIHDL…EMTIRRFDEF (74 aa).

This sequence belongs to the RimM family. As to quaternary structure, binds ribosomal protein uS19.

The protein resides in the cytoplasm. Its function is as follows. An accessory protein needed during the final step in the assembly of 30S ribosomal subunit, possibly for assembly of the head region. Essential for efficient processing of 16S rRNA. May be needed both before and after RbfA during the maturation of 16S rRNA. It has affinity for free ribosomal 30S subunits but not for 70S ribosomes. The chain is Ribosome maturation factor RimM from Prosthecochloris aestuarii (strain DSM 271 / SK 413).